Reading from the N-terminus, the 710-residue chain is Fatty acid oxidation complex subunit alpha (710 aa).

The enoyl-CoA hydratase stretch occupies residues 1–190; sequence MSMEKTFNLA…KMGLVNDVVP (190 aa). The tract at residues 310–710 is 3-hydroxyacyl-CoA dehydrogenase; it reads RKVKKVMVLG…ASDGSQFYKK (401 aa).

It in the N-terminal section; belongs to the enoyl-CoA hydratase/isomerase family. This sequence in the central section; belongs to the 3-hydroxyacyl-CoA dehydrogenase family. As to quaternary structure, heterotetramer of two alpha chains (FadJ) and two beta chains (FadI).

It is found in the cytoplasm. The catalysed reaction is a (3S)-3-hydroxyacyl-CoA = a (2E)-enoyl-CoA + H2O. The enzyme catalyses a 4-saturated-(3S)-3-hydroxyacyl-CoA = a (3E)-enoyl-CoA + H2O. It carries out the reaction a (3S)-3-hydroxyacyl-CoA + NAD(+) = a 3-oxoacyl-CoA + NADH + H(+). It catalyses the reaction (3S)-3-hydroxybutanoyl-CoA = (3R)-3-hydroxybutanoyl-CoA. It participates in lipid metabolism; fatty acid beta-oxidation. Its function is as follows. Catalyzes the formation of a hydroxyacyl-CoA by addition of water on enoyl-CoA. Also exhibits 3-hydroxyacyl-CoA epimerase and 3-hydroxyacyl-CoA dehydrogenase activities. The chain is Fatty acid oxidation complex subunit alpha from Shewanella frigidimarina (strain NCIMB 400).